The chain runs to 103 residues: Large ribosomal subunit protein bL21 (103 aa).

The protein belongs to the bacterial ribosomal protein bL21 family. Part of the 50S ribosomal subunit. Contacts protein L20.

In terms of biological role, this protein binds to 23S rRNA in the presence of protein L20. In Psychrobacter sp. (strain PRwf-1), this protein is Large ribosomal subunit protein bL21.